Here is a 313-residue protein sequence, read N- to C-terminus: MKTELIRTISLYDTIILHRHVRPDPDAYGSQCGLTEILRETYPEKNIFAVGTPEPSLSFLYSLDEVDNETYEGALVIVCDTANQERIDDQRYPSGAKLMKIDHHPNEDPYGDLLWVDTSASSVSEMIYELYLEGKEHGWKLNTKAAELIYAGIVGDTGRFLFPNTTEKTLKYAGELIQYPFSSSELFNQLYETKLNVVKLNGFIFQNVSLSENGAASVFIKKDTLEKFGTTASEASQLVGTLGNISGIRAWVFFVEEDDQIRVRFRSKGPVINGLARKYNGGGHPLASGASIYSWDEADRILADLETLCKEHE.

Belongs to the NrnA oligoribonuclease family. Tetramer. The cofactor is Mn(2+).

It catalyses the reaction adenosine 3',5'-bisphosphate + H2O = AMP + phosphate. Its function is as follows. Bifunctional enzyme which has both oligoribonuclease and pAp-phosphatase activities. Degrades RNA and DNA oligonucleotides with a length of 5 nucleotides and shorter, with a preference for 3-mers. Directionality is controversial; shown to degrade 5-mers and less in a 3' to 5' direction, and 11-mers in a 5' to 3' direction. Converts 3'(2')-phosphoadenosine 5'-phosphate (PAP) to AMP. This chain is Bifunctional oligoribonuclease and PAP phosphatase NrnA (nrnA), found in Bacillus subtilis (strain 168).